The chain runs to 677 residues: Gamma-tubulin complex subunit mod21 (677 aa).

Component of the gamma-tubulin complex composed of at least alp4, alp6, alp16, ghf1, gtb1 and mod21.

The protein resides in the cytoplasm. It is found in the cytoskeleton. Its subcellular location is the microtubule organizing center. It localises to the spindle pole body. Its function is as follows. Component of the gamma-tubulin complex that is required for the regulation of both interphase microtubule organization and nucleation, and mitotic bipolar spindles. Required for correct septation. This chain is Gamma-tubulin complex subunit mod21, found in Schizosaccharomyces pombe (strain 972 / ATCC 24843) (Fission yeast).